We begin with the raw amino-acid sequence, 758 residues long: Morphogenetic regulator of filamentous growth protein 1 (758 aa).

Positions 1–10 (MNGNNNTGNL) are enriched in polar residues. Disordered regions lie at residues 1 to 49 (MNGN…GNNA), 87 to 293 (AAAA…VSGR), 408 to 433 (NKATSNNNNNNTNTNTNNSNNNNKPH), and 650 to 758 (NFSG…KRRK). Residues 11 to 31 (QQSHGPPQQQQQQQMFNQTPQ) are compositionally biased toward low complexity. A compositionally biased stretch (polar residues) spans 100-116 (RNPNYNGSPNPGQTLPL). Residues 117–128 (NNNNNNSNNNNN) are compositionally biased toward low complexity. Polar residues predominate over residues 142 to 168 (MPSSNLQPTSSAGNSRGHTPRMVNQPQ). Low complexity predominate over residues 183-210 (QQQQQQQQQQQQPTPQLPPQGQTPQQVQ). Composition is skewed to polar residues over residues 218-229 (NNGNLVANQSLK) and 249-261 (PNSSFQQSPQTQF). 2 stretches are compositionally biased toward low complexity: residues 264–288 (PPNSNGPINPQQQQQQHGPNQNPQP) and 408–430 (NKATSNNNNNNTNTNTNNSNNNN). Polar residues predominate over residues 650–665 (NFSGSTNLQTDAQRSR). A compositionally biased stretch (low complexity) spans 666-715 (QQQQQQQQQQQQQQQQQSLNTSNNNSNSNNSNNNNNNNSNNNNNNNNNNN). Residues 722–734 (NGSNNISSPSPRT) are compositionally biased toward polar residues.

It belongs to the MFG1 family. Interacts with FLO8 and MSS11, both morphogenetic transcription factors binding directly to the FLO11 promoter.

It is found in the nucleus. Its function is as follows. Transcriptional regulator with a general role in all morphogenetically distinct forms of filamentous growth, namely invasive growth and biofilm formation. May control FLO11 gene expression as part of a promoter-bound complex with FLO8 and MSS1. Important for virulence. The polypeptide is Morphogenetic regulator of filamentous growth protein 1 (MFG1) (Candida albicans (strain SC5314 / ATCC MYA-2876) (Yeast)).